Consider the following 442-residue polypeptide: D-serine dehydratase 1 (442 aa).

The residue at position 118 (K118) is an N6-(pyridoxal phosphate)lysine.

Belongs to the serine/threonine dehydratase family. DsdA subfamily. As to quaternary structure, monomer. Pyridoxal 5'-phosphate serves as cofactor.

It carries out the reaction D-serine = pyruvate + NH4(+). The sequence is that of D-serine dehydratase 1 from Escherichia coli O6:K15:H31 (strain 536 / UPEC).